A 248-amino-acid chain; its full sequence is MNLFFSAPPLVAELEVGHHLYWHLGKFTVHGQVLIASWIAIALILTVVLLGTRQLQREPAGLQNFIEYTLEFVQSIARAQIGEKNFRPWVPYVGTLFLFIFVSNWMGNLFPWKLIPLPEGELASPTNDINTTAGLALLTSVMYFVAGISKRGLSYFKKYIEPTPVLLPINVLEDFTKPLSLSFRLFGNILAEELVIAVLVLLVPLLIPVPVMILFLFTGAIQALIFSTLSAAYIGEALEGHGGGDHHD.

Transmembrane regions (helical) follow at residues 31 to 51 (GQVL…VLLG), 90 to 110 (VPYV…GNLF), 129 to 149 (INTT…AGIS), 195 to 215 (VIAV…MILF), and 216 to 236 (LFTG…YIGE).

This sequence belongs to the ATPase A chain family. In terms of assembly, F-type ATPases have 2 components, CF(1) - the catalytic core - and CF(0) - the membrane proton channel. CF(1) has five subunits: alpha(3), beta(3), gamma(1), delta(1), epsilon(1). CF(0) has four main subunits: a, b, b' and c.

The protein resides in the cellular thylakoid membrane. Its function is as follows. Key component of the proton channel; it plays a direct role in the translocation of protons across the membrane. In Synechococcus sp. (strain JA-3-3Ab) (Cyanobacteria bacterium Yellowstone A-Prime), this protein is ATP synthase subunit a.